The following is a 334-amino-acid chain: Holliday junction branch migration complex subunit RuvB (334 aa).

The large ATPase domain (RuvB-L) stretch occupies residues 1–180 (MSEFLTPERT…FGIILELDFY (180 aa)). ATP is bound by residues Leu19, Arg20, Gly61, Lys64, Thr65, Thr66, 127 to 129 (EDF), Arg170, Tyr180, and Arg217. Thr65 contributes to the Mg(2+) binding site. The segment at 181–251 (TVKELKEIIK…IVLKTMEVLN (71 aa)) is small ATPAse domain (RuvB-S). The tract at residues 254–334 (AEGLDEFDRK…KYEVPENRLF (81 aa)) is head domain (RuvB-H). 2 residues coordinate DNA: Arg309 and Arg314.

Belongs to the RuvB family. Homohexamer. Forms an RuvA(8)-RuvB(12)-Holliday junction (HJ) complex. HJ DNA is sandwiched between 2 RuvA tetramers; dsDNA enters through RuvA and exits via RuvB. An RuvB hexamer assembles on each DNA strand where it exits the tetramer. Each RuvB hexamer is contacted by two RuvA subunits (via domain III) on 2 adjacent RuvB subunits; this complex drives branch migration. In the full resolvosome a probable DNA-RuvA(4)-RuvB(12)-RuvC(2) complex forms which resolves the HJ.

The protein localises to the cytoplasm. It catalyses the reaction ATP + H2O = ADP + phosphate + H(+). Its function is as follows. The RuvA-RuvB-RuvC complex processes Holliday junction (HJ) DNA during genetic recombination and DNA repair, while the RuvA-RuvB complex plays an important role in the rescue of blocked DNA replication forks via replication fork reversal (RFR). RuvA specifically binds to HJ cruciform DNA, conferring on it an open structure. The RuvB hexamer acts as an ATP-dependent pump, pulling dsDNA into and through the RuvAB complex. RuvB forms 2 homohexamers on either side of HJ DNA bound by 1 or 2 RuvA tetramers; 4 subunits per hexamer contact DNA at a time. Coordinated motions by a converter formed by DNA-disengaged RuvB subunits stimulates ATP hydrolysis and nucleotide exchange. Immobilization of the converter enables RuvB to convert the ATP-contained energy into a lever motion, pulling 2 nucleotides of DNA out of the RuvA tetramer per ATP hydrolyzed, thus driving DNA branch migration. The RuvB motors rotate together with the DNA substrate, which together with the progressing nucleotide cycle form the mechanistic basis for DNA recombination by continuous HJ branch migration. Branch migration allows RuvC to scan DNA until it finds its consensus sequence, where it cleaves and resolves cruciform DNA. The sequence is that of Holliday junction branch migration complex subunit RuvB from Thermotoga petrophila (strain ATCC BAA-488 / DSM 13995 / JCM 10881 / RKU-1).